Reading from the N-terminus, the 349-residue chain is Estrogen receptor (349 aa).

A DNA-binding region (nuclear receptor) is located at residues Y1–M5. The disordered stretch occupies residues Y1 to T38. Basic residues predominate over residues K12–R24. Residues T65 to H301 form the NR LBD domain. The disordered stretch occupies residues P306–P327.

The protein belongs to the nuclear hormone receptor family. NR3 subfamily. In terms of assembly, binds DNA as a homodimer. Can form a heterodimer with ER-beta.

It localises to the nucleus. Functionally, the steroid hormones and their receptors are involved in the regulation of eukaryotic gene expression and affect cellular proliferation and differentiation in target tissues. This is Estrogen receptor (ESR1) from Anolis carolinensis (Green anole).